The chain runs to 834 residues: Translation initiation factor IF-2 (834 aa).

The segment at 1–247 is disordered; sequence MTEEKKFSGS…STPATVRKEQ (247 aa). Residues 45–101 show a composition bias toward low complexity; the sequence is GGSRPSRPARPNNNNQNRPNNGGQSQNRNNQNRSNTSTGGQNRSNNGGNRNNRPGSR. Residues 109 to 125 are compositionally biased toward basic and acidic residues; it reads PMIREKKNWSTKPREGQ. 2 stretches are compositionally biased toward low complexity: residues 149–165 and 173–201; these read ASAA…ATKP and ATKP…SARN. Basic residues predominate over residues 224 to 233; the sequence is GSKKSRRIAA. The region spanning 335–504 is the tr-type G domain; sequence SRPPVVTIMG…LLQAEVLELK (170 aa). The interval 344–351 is G1; sequence GHVDHGKT. 344 to 351 lines the GTP pocket; sequence GHVDHGKT. Residues 369 to 373 form a G2 region; the sequence is GITQH. Positions 390–393 are G3; that stretch reads DTPG. Residues 390 to 394 and 444 to 447 each bind GTP; these read DTPGH and NKID. Positions 444-447 are G4; sequence NKID. Residues 480–482 form a G5 region; that stretch reads SAK.

This sequence belongs to the TRAFAC class translation factor GTPase superfamily. Classic translation factor GTPase family. IF-2 subfamily.

The protein resides in the cytoplasm. Its function is as follows. One of the essential components for the initiation of protein synthesis. Protects formylmethionyl-tRNA from spontaneous hydrolysis and promotes its binding to the 30S ribosomal subunits. Also involved in the hydrolysis of GTP during the formation of the 70S ribosomal complex. The polypeptide is Translation initiation factor IF-2 (Leuconostoc mesenteroides subsp. mesenteroides (strain ATCC 8293 / DSM 20343 / BCRC 11652 / CCM 1803 / JCM 6124 / NCDO 523 / NBRC 100496 / NCIMB 8023 / NCTC 12954 / NRRL B-1118 / 37Y)).